The chain runs to 183 residues: Capsid protein (183 aa).

The disordered stretch occupies residues 136–183; it reads NAPILSTLPETTVVRRRGRSPRRRTPSPRRRRSQSPRRRRSQSRESQC. The span at 149-176 shows a compositional bias: basic residues; that stretch reads VRRRGRSPRRRTPSPRRRRSQSPRRRRS. Phosphoserine; by host occurs at positions 155, 162, and 170. One copy of the 1; half-length repeat lies at 155-161; it reads SPRRRTP. The tract at residues 155 to 177 is 3 X 8 AA repeats of S-P-R-R-R-[PR]-S-Q; that stretch reads SPRRRTPSPRRRRSQSPRRRRSQ. The Bipartite nuclear localization signal signature appears at 158 to 175; sequence RRTPSPRRRRSQSPRRRR. Repeat copies occupy residues 162–169 and 170–177. The interval 177-183 is RNA binding; the sequence is QSRESQC.

The protein belongs to the orthohepadnavirus core antigen family. Homodimerizes, then multimerizes. Interacts with cytosol exposed regions of viral L glycoprotein present in the reticulum-to-Golgi compartment. Interacts with human FLNB. Phosphorylated form interacts with host importin alpha; this interaction depends on the exposure of the NLS, which itself depends upon genome maturation and/or phosphorylation of the capsid protein. Interacts with host NUP153. Phosphorylated by host SRPK1, SRPK2, and maybe protein kinase C or GAPDH. Phosphorylation is critical for pregenomic RNA packaging. Protein kinase C phosphorylation is stimulated by HBx protein and may play a role in transport of the viral genome to the nucleus at the late step during the viral replication cycle.

It localises to the virion. The protein resides in the host cytoplasm. Functionally, self assembles to form an icosahedral capsid. Most capsids appear to be large particles with an icosahedral symmetry of T=4 and consist of 240 copies of capsid protein, though a fraction forms smaller T=3 particles consisting of 180 capsid proteins. Entering capsids are transported along microtubules to the nucleus. Phosphorylation of the capsid is thought to induce exposure of nuclear localization signal in the C-terminal portion of the capsid protein that allows binding to the nuclear pore complex via the importin (karyopherin-) alpha and beta. Capsids are imported in intact form through the nuclear pore into the nuclear basket, where it probably binds NUP153. Only capsids that contain the mature viral genome can release the viral DNA and capsid protein into the nucleoplasm. Immature capsids get stuck in the basket. Capsids encapsulate the pre-genomic RNA and the P protein. Pre-genomic RNA is reverse-transcribed into DNA while the capsid is still in the cytoplasm. The capsid can then either be directed to the nucleus, providing more genomes for transcription, or bud through the endoplasmic reticulum to provide new virions. In Homo sapiens (Human), this protein is Capsid protein.